The chain runs to 83 residues: Cell division topological specificity factor (83 aa).

The protein belongs to the MinE family.

Prevents the cell division inhibition by proteins MinC and MinD at internal division sites while permitting inhibition at polar sites. This ensures cell division at the proper site by restricting the formation of a division septum at the midpoint of the long axis of the cell. The protein is Cell division topological specificity factor of Buchnera aphidicola subsp. Acyrthosiphon pisum (strain 5A).